The following is a 249-amino-acid chain: Tumor necrosis factor ligand superfamily member 12 (249 aa).

At 1–21 (MAARRSQRRRGRRGEPGTALL) the chain is on the cytoplasmic side. Residues 22–45 (APLVLSLGLALACLGLLLVVVSLG) traverse the membrane as a helical; Signal-anchor for type II membrane protein segment. The Extracellular segment spans residues 46–249 (SWATLSAQEP…LTYFGLFQVH (204 aa)). Residues 52–78 (AQEPSQEELTAEDRREPPELNPQTEES) form a disordered region. Residues 107–248 (IAAHYEVHPR…FLTYFGLFQV (142 aa)) form the THD domain. Asn-139 carries N-linked (GlcNAc...) asparagine glycosylation. The cysteines at positions 191 and 210 are disulfide-linked.

It belongs to the tumor necrosis factor family. In terms of assembly, homotrimer. Interacts with the angiogenic factor AGGF1/VG5Q. Post-translationally, the soluble form is produced from the membrane form by proteolytic processing. Widely expressed.

The protein resides in the cell membrane. Its subcellular location is the secreted. In terms of biological role, binds to FN14 and possibly also to TNRFSF12/APO3. Weak inducer of apoptosis in some cell types. Mediates NF-kappa-B activation. Promotes angiogenesis and the proliferation of endothelial cells. Also involved in induction of inflammatory cytokines. Promotes IL8 secretion. This is Tumor necrosis factor ligand superfamily member 12 (Tnfsf12) from Mus musculus (Mouse).